Reading from the N-terminus, the 180-residue chain is MEKIHATTVVAIRHNGQISIGADGQATLGNTVVKDYVKKVRKLMEGKVLCGFAGSTADAFTLLERFEEKLNTYAGNMKRAAIELAKDWRTDRYLRKLEAMMIVVNKDELLLISGTGDVIEPDNDILSIGSGSMYAQSAAAALKKHATHLSAPEMVRESLSIAADICIYTNHNFVIETAVA.

Threonine 7 is an active-site residue. Alanine 163, cysteine 166, and threonine 169 together coordinate Na(+).

Belongs to the peptidase T1B family. HslV subfamily. A double ring-shaped homohexamer of HslV is capped on each side by a ring-shaped HslU homohexamer. The assembly of the HslU/HslV complex is dependent on binding of ATP.

The protein localises to the cytoplasm. It catalyses the reaction ATP-dependent cleavage of peptide bonds with broad specificity.. Allosterically activated by HslU binding. In terms of biological role, protease subunit of a proteasome-like degradation complex believed to be a general protein degrading machinery. This chain is ATP-dependent protease subunit HslV, found in Cytophaga hutchinsonii (strain ATCC 33406 / DSM 1761 / CIP 103989 / NBRC 15051 / NCIMB 9469 / D465).